The sequence spans 101 residues: Small ribosomal subunit protein uS14 (101 aa).

The interval 1-21 (MAKTSSVEKNNRRRKLADQYG) is disordered.

This sequence belongs to the universal ribosomal protein uS14 family. In terms of assembly, part of the 30S ribosomal subunit. Contacts proteins S3 and S10.

Its function is as follows. Binds 16S rRNA, required for the assembly of 30S particles and may also be responsible for determining the conformation of the 16S rRNA at the A site. The chain is Small ribosomal subunit protein uS14 from Mesorhizobium japonicum (strain LMG 29417 / CECT 9101 / MAFF 303099) (Mesorhizobium loti (strain MAFF 303099)).